The following is a 635-amino-acid chain: Dual specificity protein kinase zak2 (635 aa).

Protein kinase domains are found at residues 9–249 and 299–585; these read WEEI…HRLI and NKDD…QIYF. ATP contacts are provided by residues 15–23 and lysine 45; that span reads IGSCNSKSR. Aspartate 124 functions as the Proton acceptor in the catalytic mechanism. ATP-binding positions include 305–313 and lysine 326; that span reads GGDGFFSVV. Aspartate 427 functions as the Proton acceptor in the catalytic mechanism.

The protein in the N-terminal section; belongs to the protein kinase superfamily. Ser/Thr protein kinase family. In the C-terminal section; belongs to the protein kinase superfamily. TKL Tyr protein kinase family. Post-translationally, C-terminal tyrosine kinase domain is capable of autophosphorylation, in vitro. ZakA and zak2 are coexpressed in prestalk cell population, zakA is enriched in pstB populations and zak1 in pstA populations. ZakA and zak2 are coexpressed in prespore cells, zakA expression levels are 10 fold higher than zak2.

The enzyme catalyses L-seryl-[protein] + ATP = O-phospho-L-seryl-[protein] + ADP + H(+). It carries out the reaction L-threonyl-[protein] + ATP = O-phospho-L-threonyl-[protein] + ADP + H(+). It catalyses the reaction L-tyrosyl-[protein] + ATP = O-phospho-L-tyrosyl-[protein] + ADP + H(+). Functionally, positive regulator of gsk3/gskA activity required for cell pattern formation and a downstream effector of carC. The kinases, gsk3/gskA, zakA and zak2, form part of a signaling pathway that responds to extracellular cyclic AMP. The pathway has a role in transcriptional regulation; required to direct prespore/spore fates during development. Zak2 negatively regulates prestalk differentiation by regulating expression of ecmA. Phosphorylates Y-214 of gsk3/gskA, in vitro. The protein is Dual specificity protein kinase zak2 (zak2) of Dictyostelium discoideum (Social amoeba).